Consider the following 766-residue polypeptide: Flocculation suppression protein (766 aa).

Disordered stretches follow at residues 1-52 (MSEE…HGSK), 129-181 (HDHS…PTKI), 203-247 (KRRA…SSNS), 547-619 (KPVP…SISG), and 657-766 (SVTP…KVKM). Low complexity-rich tracts occupy residues 8-19 (SAPAPASTPAPA) and 134-147 (NDAN…TNDD). Residues 64-186 (IFIHKLYQIL…NPTKIWEFKH (123 aa)) mediate DNA binding. Over residues 171-181 (QEKEKSNPTKI) the composition is skewed to basic and acidic residues. The span at 208–224 (SRNNSSINSRKNSSNQN) shows a compositional bias: low complexity. Serine 220 carries the post-translational modification Phosphoserine. Over residues 236–247 (SSIQDPSTSSNS) the composition is skewed to polar residues. At serine 556 the chain carries Phosphoserine. Residues 679–699 (AVSSNLINSPMNVEHSSSLSQ) show a composition bias toward polar residues. Residues 708 to 719 (LPQPSLPTTSTT) are compositionally biased toward low complexity. Serine 733 bears the Phosphoserine mark. The span at 738-750 (LLNQEDSSTSSAD) shows a compositional bias: polar residues.

In the N-terminal section; belongs to the HSF family.

It is found in the nucleus. Involved in cell surface assembly and regulation of the gene related to flocculation (asexual cell aggregation). Mutations in SFL1 causes constitutive cell aggregation. The protein is Flocculation suppression protein (SFL1) of Saccharomyces cerevisiae (strain ATCC 204508 / S288c) (Baker's yeast).